The primary structure comprises 141 residues: Nucleoside diphosphate kinase (141 aa).

Residues K11, F59, R87, T93, R104, and N114 each coordinate ATP. Catalysis depends on H117, which acts as the Pros-phosphohistidine intermediate.

Belongs to the NDK family. In terms of assembly, homotetramer. The cofactor is Mg(2+).

Its subcellular location is the cytoplasm. It carries out the reaction a 2'-deoxyribonucleoside 5'-diphosphate + ATP = a 2'-deoxyribonucleoside 5'-triphosphate + ADP. The catalysed reaction is a ribonucleoside 5'-diphosphate + ATP = a ribonucleoside 5'-triphosphate + ADP. In terms of biological role, major role in the synthesis of nucleoside triphosphates other than ATP. The ATP gamma phosphate is transferred to the NDP beta phosphate via a ping-pong mechanism, using a phosphorylated active-site intermediate. The polypeptide is Nucleoside diphosphate kinase (Cupriavidus pinatubonensis (strain JMP 134 / LMG 1197) (Cupriavidus necator (strain JMP 134))).